The sequence spans 133 residues: ATP synthase epsilon chain, chloroplastic (133 aa).

The protein belongs to the ATPase epsilon chain family. As to quaternary structure, F-type ATPases have 2 components, CF(1) - the catalytic core - and CF(0) - the membrane proton channel. CF(1) has five subunits: alpha(3), beta(3), gamma(1), delta(1), epsilon(1). CF(0) has three main subunits: a, b and c.

It is found in the plastid. It localises to the chloroplast thylakoid membrane. Produces ATP from ADP in the presence of a proton gradient across the membrane. This is ATP synthase epsilon chain, chloroplastic from Jasminum nudiflorum (Winter jasmine).